Consider the following 317-residue polypeptide: tRNA dimethylallyltransferase (317 aa).

14-21 (GPTAVGKT) provides a ligand contact to ATP. Substrate is bound at residue 16–21 (TAVGKT). The tract at residues 39 to 42 (DSMQ) is interaction with substrate tRNA.

It belongs to the IPP transferase family. As to quaternary structure, monomer. Mg(2+) serves as cofactor.

The catalysed reaction is adenosine(37) in tRNA + dimethylallyl diphosphate = N(6)-dimethylallyladenosine(37) in tRNA + diphosphate. In terms of biological role, catalyzes the transfer of a dimethylallyl group onto the adenine at position 37 in tRNAs that read codons beginning with uridine, leading to the formation of N6-(dimethylallyl)adenosine (i(6)A). This is tRNA dimethylallyltransferase from Bacillus thuringiensis subsp. konkukian (strain 97-27).